Consider the following 841-residue polypeptide: Probable outer membrane usher protein EcpC (841 aa).

Residues methionine 1–alanine 29 form the signal peptide.

This sequence belongs to the EcpC/MatD family.

Functionally, part of the ecpRABCDE operon, which encodes the E.coli common pilus (ECP). ECP is found in both commensal and pathogenic strains and plays a dual role in early-stage biofilm development and host cell recognition. In Escherichia coli O18:K1:H7 (strain IHE3034 / ExPEC), this protein is Probable outer membrane usher protein EcpC (ecpC).